Consider the following 442-residue polypeptide: MKIPSQRQLAIQYNVNRVTIIKSIELLEAEGFIYTKVGSGTYVNDYLNEAHITNKWSEMMLWSSRQRSQYTVQLINKIETDASYIHISKGELGQPLMPHIQLKKAMSNTASHIEDLSFGYNNGYGYIKLRDIIVERMSKQGINVGRENVMITSGALHAIQLLSIGFLGQDAIIISNTPSYIHSTNVFEQLNFRHIDAPYNQINEINTIIDRFINFKNKALYIEPRFNNPTGCSLTNEQKQNIITYSERHNIPIIEDDIFRDIFFSDPTPAIKTFDKLGKVIHISSFSKTIAPAIRIGWIVASEKIIEQLADVRMQIDYGSSILSQMVVYEMLKNKSYDKHLVKLRYVLKDKRDFMLNILNNLFKDIAHWEVSSGGYFVWLVFKIDIDIKYLFYELLSKEKILINPGYIYGSKEKSIRLSFAFESNENIKHALYKIYTYVKKV.

In terms of domain architecture, HTH gntR-type spans lysine 2 to tyrosine 46. The H-T-H motif DNA-binding region spans glutamine 6–glutamate 25. N6-(pyridoxal phosphate)lysine is present on lysine 288.

In the C-terminal section; belongs to the class-I pyridoxal-phosphate-dependent aminotransferase family. The cofactor is pyridoxal 5'-phosphate.

In terms of biological role, positively regulates the expression of the NorB efflux pump and negatively regulates the expression of the AbcA efflux pump. Binds specifically to the promoters of norA, norB and norC and abcA genes. Could also have an aminotransferase activity. In Staphylococcus aureus (strain bovine RF122 / ET3-1), this protein is HTH-type transcriptional regulator NorG (norG).